We begin with the raw amino-acid sequence, 1887 residues long: Bifunctional serine/threonine-protein kinase/NEDD4-like E3 ubiquitin-protein ligase (1887 aa).

Disordered regions lie at residues 19–55 and 72–98; these read TPQV…TTNF and TDNY…TKEN. 2 stretches are compositionally biased toward low complexity: residues 26–54 and 72–97; these read NNSN…STTN and TDNY…NTKE. RCC1 repeat units lie at residues 206–260, 262–314, 356–409, 411–470, 472–528, and 529–581; these read QGNL…ALTI, GKVY…NNNN, KGLL…VLTN, GLVF…AISD, NDTY…AMSI, and DGSL…IVEK. Residues 299-333 form a disordered region; the sequence is NNNNNNNNNNSTNNNNNNNNDGAQQQFSLSQNSSS. Disordered stretches follow at residues 594 to 619, 823 to 858, and 1030 to 1088; these read LPSS…SDSN, VLVH…KNGT, and DDDN…NNNN. Residues 825–839 show a composition bias toward basic and acidic residues; that stretch reads VHQDEKQQQREKSET. Over residues 840 to 852 the composition is skewed to acidic residues; the sequence is ELEEEQDEEEEDS. A compositionally biased stretch (low complexity) spans 1036–1088; it reads ENNSVNNNSNNNNNNNNNNNNNNNNNNNNNNNIDNNINSNSINDSSNNNNNNN. In terms of domain architecture, Protein kinase spans 1158 to 1437; that stretch reads YDIIKTLSTH…AHQIAVHPYF (280 aa). Residues 1164–1172 and Lys1184 each bind ATP; that span reads LSTHPHNVY. Residue Asp1281 is the Proton acceptor of the active site. Residues 1501–1887 form the HECT domain; that stretch reads ESNKLFCRLE…LEYVDGFAFI (387 aa). The disordered stretch occupies residues 1586–1628; sequence NNNNNNEENNNNNNNNNNNNNNNNNNNNNNNNNNNNNNNNNEE. Cys1855 serves as the catalytic Glycyl thioester intermediate.

This sequence in the N-terminal section; belongs to the protein kinase superfamily. Ser/Thr protein kinase family. The protein in the C-terminal section; belongs to the protein kinase superfamily. CAMK Ser/Thr protein kinase family.

It carries out the reaction L-seryl-[protein] + ATP = O-phospho-L-seryl-[protein] + ADP + H(+). It catalyses the reaction L-threonyl-[protein] + ATP = O-phospho-L-threonyl-[protein] + ADP + H(+). The catalysed reaction is S-ubiquitinyl-[E2 ubiquitin-conjugating enzyme]-L-cysteine + [acceptor protein]-L-lysine = [E2 ubiquitin-conjugating enzyme]-L-cysteine + N(6)-ubiquitinyl-[acceptor protein]-L-lysine.. It participates in protein modification; protein ubiquitination. In Dictyostelium discoideum (Social amoeba), this protein is Bifunctional serine/threonine-protein kinase/NEDD4-like E3 ubiquitin-protein ligase.